Consider the following 125-residue polypeptide: Large ribosomal subunit protein bL12 (125 aa).

It belongs to the bacterial ribosomal protein bL12 family. As to quaternary structure, homodimer. Part of the ribosomal stalk of the 50S ribosomal subunit. Forms a multimeric L10(L12)X complex, where L10 forms an elongated spine to which 2 to 4 L12 dimers bind in a sequential fashion. Binds GTP-bound translation factors.

Functionally, forms part of the ribosomal stalk which helps the ribosome interact with GTP-bound translation factors. Is thus essential for accurate translation. In Coprothermobacter proteolyticus (strain ATCC 35245 / DSM 5265 / OCM 4 / BT), this protein is Large ribosomal subunit protein bL12.